The chain runs to 102 residues: Large ribosomal subunit protein eL31 (102 aa).

It belongs to the eukaryotic ribosomal protein eL31 family.

The polypeptide is Large ribosomal subunit protein eL31 (Staphylothermus marinus (strain ATCC 43588 / DSM 3639 / JCM 9404 / F1)).